Here is a 444-residue protein sequence, read N- to C-terminus: Probable D-serine dehydratase (444 aa).

Position 118 is an N6-(pyridoxal phosphate)lysine (Lys-118).

It belongs to the serine/threonine dehydratase family. DsdA subfamily. It depends on pyridoxal 5'-phosphate as a cofactor.

The enzyme catalyses D-serine = pyruvate + NH4(+). This is Probable D-serine dehydratase from Desulfitobacterium hafniense (strain Y51).